The chain runs to 136 residues: Small ribosomal subunit protein uS11c (136 aa).

This sequence belongs to the universal ribosomal protein uS11 family. Part of the 30S ribosomal subunit.

The protein localises to the plastid. It localises to the chloroplast. The polypeptide is Small ribosomal subunit protein uS11c (Guizotia abyssinica (Niger)).